Here is a 375-residue protein sequence, read N- to C-terminus: Succinyl-diaminopimelate desuccinylase (375 aa).

Residue His-66 coordinates Zn(2+). Asp-68 is an active-site residue. Asp-99 is a binding site for Zn(2+). Glu-133 (proton acceptor) is an active-site residue. Glu-134, Glu-162, and His-348 together coordinate Zn(2+).

This sequence belongs to the peptidase M20A family. DapE subfamily. Homodimer. Requires Zn(2+) as cofactor. The cofactor is Co(2+).

It catalyses the reaction N-succinyl-(2S,6S)-2,6-diaminopimelate + H2O = (2S,6S)-2,6-diaminopimelate + succinate. It participates in amino-acid biosynthesis; L-lysine biosynthesis via DAP pathway; LL-2,6-diaminopimelate from (S)-tetrahydrodipicolinate (succinylase route): step 3/3. In terms of biological role, catalyzes the hydrolysis of N-succinyl-L,L-diaminopimelic acid (SDAP), forming succinate and LL-2,6-diaminopimelate (DAP), an intermediate involved in the bacterial biosynthesis of lysine and meso-diaminopimelic acid, an essential component of bacterial cell walls. In Escherichia coli O139:H28 (strain E24377A / ETEC), this protein is Succinyl-diaminopimelate desuccinylase.